The following is an 831-amino-acid chain: MutS protein homolog 5 (831 aa).

Positions 1–43 (MAFRATPGRTPPGPGPGVPSASFSSPQPAMAAPGGIEEEDEEE) are disordered. Position 589 to 596 (589 to 596 (GPNSSGKS)) interacts with ATP.

It belongs to the DNA mismatch repair MutS family. In terms of assembly, heterooligomer of MSH4 and MSH5. Interacts with HJURP. Interacts with C7h12orf40/REDIC1.

In terms of biological role, involved in DNA mismatch repair and meiotic recombination processes. Facilitates crossovers between homologs during meiosis. This chain is MutS protein homolog 5 (Msh5), found in Rattus norvegicus (Rat).